The following is a 474-amino-acid chain: Bifunctional protein HldE (474 aa).

Positions 1–318 (MKLSMPRFDQ…RAIQREEGSE (318 aa)) are ribokinase. An ATP-binding site is contributed by 194–197 (NLSE). Residue D263 is part of the active site. Residues 343–474 (FTNGCFDILH…AIVEKIRGQG (132 aa)) form a cytidylyltransferase region.

It in the N-terminal section; belongs to the carbohydrate kinase PfkB family. The protein in the C-terminal section; belongs to the cytidylyltransferase family. As to quaternary structure, homodimer.

It catalyses the reaction D-glycero-beta-D-manno-heptose 7-phosphate + ATP = D-glycero-beta-D-manno-heptose 1,7-bisphosphate + ADP + H(+). The enzyme catalyses D-glycero-beta-D-manno-heptose 1-phosphate + ATP + H(+) = ADP-D-glycero-beta-D-manno-heptose + diphosphate. It functions in the pathway nucleotide-sugar biosynthesis; ADP-L-glycero-beta-D-manno-heptose biosynthesis; ADP-L-glycero-beta-D-manno-heptose from D-glycero-beta-D-manno-heptose 7-phosphate: step 1/4. The protein operates within nucleotide-sugar biosynthesis; ADP-L-glycero-beta-D-manno-heptose biosynthesis; ADP-L-glycero-beta-D-manno-heptose from D-glycero-beta-D-manno-heptose 7-phosphate: step 3/4. Catalyzes the phosphorylation of D-glycero-D-manno-heptose 7-phosphate at the C-1 position to selectively form D-glycero-beta-D-manno-heptose-1,7-bisphosphate. In terms of biological role, catalyzes the ADP transfer from ATP to D-glycero-beta-D-manno-heptose 1-phosphate, yielding ADP-D-glycero-beta-D-manno-heptose. This chain is Bifunctional protein HldE, found in Pseudomonas savastanoi pv. phaseolicola (strain 1448A / Race 6) (Pseudomonas syringae pv. phaseolicola (strain 1448A / Race 6)).